We begin with the raw amino-acid sequence, 392 residues long: Stilbene synthase 6 (392 aa).

Lysine 55 to arginine 58 provides a ligand contact to substrate. The active site involves cysteine 164. Substrate is bound by residues leucine 267 and glycine 305–proline 307.

The protein belongs to the thiolase-like superfamily. Chalcone/stilbene synthases family. As to quaternary structure, homodimer.

It localises to the cytoplasm. It catalyses the reaction 4-coumaroyl-CoA + 3 malonyl-CoA + 3 H(+) = trans-resveratrol + 4 CO2 + 4 CoA. It participates in phytoalexin biosynthesis; 3,4',5-trihydroxystilbene biosynthesis; 3,4',5-trihydroxystilbene from trans-4-coumarate: step 2/2. Mediates resistance to pathogens which are sensitive to stilbenes. The protein is Stilbene synthase 6 (STS) of Vitis vinifera (Grape).